We begin with the raw amino-acid sequence, 1053 residues long: Serine/threonine-protein phosphatase 6 regulatory ankyrin repeat subunit A (1053 aa).

ANK repeat units lie at residues 40–69 (EKRT…RVNA), 73–102 (KWLT…DVNA), 106–135 (NWQT…NVNV), 139–168 (AGRT…NINA), 172–201 (KDRR…EVTC), 205–234 (KSYT…DMNE), 238–267 (YGNT…IVNQ), 271–301 (KGFT…DVNM), 305–334 (DGKT…VIDC), 338–367 (NGNT…DTAK), 371–400 (HGMF…DIDT), 404–433 (FGRT…DFNK), 437–466 (FGRS…SVND), 470–500 (RGCT…NPGI), 504–534 (QGYN…DVLM), 549–578 (ATIS…DLDV), 582–611 (SGRT…SILV), 616–645 (LKRT…PQNA), 652–681 (NGQT…NVDA), 685–714 (WGRT…KCLL), 718–747 (RGRT…SMDA), 755–784 (HGYT…FQKT), 787–817 (NAFS…SIVN), 822–851 (KGRT…QVNS), 855–885 (TGKT…ELTL), 889–918 (SKNT…DRNL), and 925–954 (ALQT…SVLA). Phosphoserine is present on residues Ser1007 and Ser1011.

Protein phosphatase 6 (PP6) holoenzyme is proposed to be a heterotrimeric complex formed by the catalytic subunit, a SAPS domain-containing subunit (PP6R) and an ankyrin repeat-domain containing regulatory subunit (ARS). Interacts with PPP6C, PPP6R1 and PPP6R3. Interacts with PPP1C and HNRPK. In terms of processing, ubiquitinated by the ECS(RAB40C) complex leading to its degradation and decreased PP6 activity.

Its subcellular location is the nucleus. The protein localises to the nucleoplasm. It localises to the cytoplasm. The protein resides in the cytosol. It is found in the cell projection. Its subcellular location is the lamellipodium. Its function is as follows. Regulatory subunit of protein phosphatase 6 (PP6) that may be involved in the recognition of phosphoprotein substrates. Involved in the PP6-mediated dephosphorylation of NFKBIE opposing its degradation in response to TNF-alpha. Selectively inhibits the phosphatase activity of PPP1C. Targets PPP1C to modulate HNRPK phosphorylation. Involved in the PP6-mediated dephosphorylation of MOB1 and induced focal adhesion assembly during cell migration. The chain is Serine/threonine-protein phosphatase 6 regulatory ankyrin repeat subunit A from Homo sapiens (Human).